A 256-amino-acid chain; its full sequence is Transmembrane protein 74B (256 aa).

The disordered stretch occupies residues 1-111 (MPPAQGYEFA…LSLHSEEGPA (111 aa)). Residues 80 to 96 (RLGSSPSPPGGVSSLPR) are compositionally biased toward low complexity. A compositionally biased stretch (basic and acidic residues) spans 97–108 (SQRDDLSLHSEE). 2 consecutive transmembrane segments (helical) span residues 123 to 143 (FVSA…AYAI) and 177 to 197 (IIAG…LLMV).

This sequence belongs to the TMEM74 family.

The protein localises to the membrane. The sequence is that of Transmembrane protein 74B (TMEM74B) from Homo sapiens (Human).